Here is a 373-residue protein sequence, read N- to C-terminus: Leucine aminopeptidase 1 (373 aa).

A signal peptide spans M1–G18. Zn(2+) contacts are provided by H176 and D195. N196 carries N-linked (GlcNAc...) asparagine glycosylation. Residues E234 and D261 each contribute to the Zn(2+) site. N286 carries an N-linked (GlcNAc...) asparagine glycan. Residues C310 and C314 are joined by a disulfide bond. H343 is a Zn(2+) binding site.

Belongs to the peptidase M28 family. M28E subfamily. Monomer. Zn(2+) serves as cofactor.

The protein resides in the secreted. Functionally, extracellular aminopeptidase which contributes to pathogenicity. This Arthroderma otae (strain ATCC MYA-4605 / CBS 113480) (Microsporum canis) protein is Leucine aminopeptidase 1 (LAP1).